We begin with the raw amino-acid sequence, 252 residues long: Demethylmenaquinone methyltransferase (252 aa).

Residues Thr-64, Asp-85, and 112-113 contribute to the S-adenosyl-L-methionine site; that span reads NA.

It belongs to the class I-like SAM-binding methyltransferase superfamily. MenG/UbiE family.

It carries out the reaction a 2-demethylmenaquinol + S-adenosyl-L-methionine = a menaquinol + S-adenosyl-L-homocysteine + H(+). It participates in quinol/quinone metabolism; menaquinone biosynthesis; menaquinol from 1,4-dihydroxy-2-naphthoate: step 2/2. Functionally, methyltransferase required for the conversion of demethylmenaquinol (DMKH2) to menaquinol (MKH2). In Lactococcus lactis subsp. lactis (strain IL1403) (Streptococcus lactis), this protein is Demethylmenaquinone methyltransferase.